We begin with the raw amino-acid sequence, 122 residues long: MEKAVNTNTEVKKATATLRYAMISPRKVRIVIDLIRNKPVQEALNILKFIPKRGARFVEKLLKSAIANAENNHNMNVDKLYIAEIYANGGPMLKRIRPRAQGRAFLIRKRTSHITVVLKERE.

This sequence belongs to the universal ribosomal protein uL22 family. Part of the 50S ribosomal subunit.

This protein binds specifically to 23S rRNA; its binding is stimulated by other ribosomal proteins, e.g. L4, L17, and L20. It is important during the early stages of 50S assembly. It makes multiple contacts with different domains of the 23S rRNA in the assembled 50S subunit and ribosome. Its function is as follows. The globular domain of the protein is located near the polypeptide exit tunnel on the outside of the subunit, while an extended beta-hairpin is found that lines the wall of the exit tunnel in the center of the 70S ribosome. The protein is Large ribosomal subunit protein uL22 of Caldicellulosiruptor saccharolyticus (strain ATCC 43494 / DSM 8903 / Tp8T 6331).